A 368-amino-acid chain; its full sequence is Histidinol-phosphate aminotransferase (368 aa).

Lys-215 carries the post-translational modification N6-(pyridoxal phosphate)lysine.

It belongs to the class-II pyridoxal-phosphate-dependent aminotransferase family. Histidinol-phosphate aminotransferase subfamily. Homodimer. Pyridoxal 5'-phosphate is required as a cofactor.

The catalysed reaction is L-histidinol phosphate + 2-oxoglutarate = 3-(imidazol-4-yl)-2-oxopropyl phosphate + L-glutamate. It participates in amino-acid biosynthesis; L-histidine biosynthesis; L-histidine from 5-phospho-alpha-D-ribose 1-diphosphate: step 7/9. This Buchnera aphidicola subsp. Acyrthosiphon pisum (strain APS) (Acyrthosiphon pisum symbiotic bacterium) protein is Histidinol-phosphate aminotransferase (hisC).